We begin with the raw amino-acid sequence, 132 residues long: Vesicle transport protein GOT1A (132 aa).

The Cytoplasmic portion of the chain corresponds to 1 to 16; it reads MISITEWQKIGVGTTG. The chain crosses the membrane as a helical span at residues 17–37; the sequence is FGIFFILFGMLLYFDSVLLAF. Residues 38-39 lie on the Lumenal side of the membrane; it reads GN. A helical transmembrane segment spans residues 40–60; it reads LLFLTGLSLIIGLRRTFSFFF. Residues 61 to 68 are Cytoplasmic-facing; that stretch reads QRHKFKGT. Residues 69–89 form a helical membrane-spanning segment; the sequence is SFFLGGVVIVLLRWPLLGMCL. The Lumenal portion of the chain corresponds to 90–100; the sequence is ETYGFFSLFRG. Residues 101–121 traverse the membrane as a helical segment; sequence FFPVAFGFLGSASNIPFLSAL. The Cytoplasmic segment spans residues 122–132; sequence FQRLQGTSSMV.

It belongs to the GOT1 family.

It is found in the golgi apparatus membrane. Its function is as follows. May be involved in fusion of ER-derived transport vesicles with the Golgi complex. The chain is Vesicle transport protein GOT1A from Bos taurus (Bovine).